A 537-amino-acid chain; its full sequence is CTP synthase (537 aa).

Positions methionine 1 to valine 267 are amidoligase domain. Serine 13 is a binding site for CTP. UTP is bound at residue serine 13. Serine 14–isoleucine 19 contributes to the ATP binding site. Tyrosine 54 is a binding site for L-glutamine. Aspartate 71 contacts ATP. Residues aspartate 71 and glutamate 141 each coordinate Mg(2+). CTP-binding positions include aspartate 148–glutamate 150, lysine 188–glutamine 193, and lysine 224. UTP contacts are provided by residues lysine 188–glutamine 193 and lysine 224. The Glutamine amidotransferase type-1 domain occupies lysine 292–valine 535. L-glutamine is bound at residue glycine 354. Catalysis depends on cysteine 381, which acts as the Nucleophile; for glutamine hydrolysis. L-glutamine contacts are provided by residues leucine 382–glutamine 385, glutamate 405, and arginine 463. Active-site residues include histidine 508 and glutamate 510.

It belongs to the CTP synthase family. In terms of assembly, homotetramer.

The enzyme catalyses UTP + L-glutamine + ATP + H2O = CTP + L-glutamate + ADP + phosphate + 2 H(+). It carries out the reaction L-glutamine + H2O = L-glutamate + NH4(+). It catalyses the reaction UTP + NH4(+) + ATP = CTP + ADP + phosphate + 2 H(+). It functions in the pathway pyrimidine metabolism; CTP biosynthesis via de novo pathway; CTP from UDP: step 2/2. With respect to regulation, allosterically activated by GTP, when glutamine is the substrate; GTP has no effect on the reaction when ammonia is the substrate. The allosteric effector GTP functions by stabilizing the protein conformation that binds the tetrahedral intermediate(s) formed during glutamine hydrolysis. Inhibited by the product CTP, via allosteric rather than competitive inhibition. Its function is as follows. Catalyzes the ATP-dependent amination of UTP to CTP with either L-glutamine or ammonia as the source of nitrogen. Regulates intracellular CTP levels through interactions with the four ribonucleotide triphosphates. In Lactiplantibacillus plantarum (strain ATCC BAA-793 / NCIMB 8826 / WCFS1) (Lactobacillus plantarum), this protein is CTP synthase.